We begin with the raw amino-acid sequence, 283 residues long: 3-methyl-2-oxobutanoate hydroxymethyltransferase (283 aa).

2 residues coordinate Mg(2+): Asp-46 and Asp-85. 3-methyl-2-oxobutanoate-binding positions include 46–47 (DS), Asp-85, and Lys-115. Glu-117 is a Mg(2+) binding site. Glu-184 functions as the Proton acceptor in the catalytic mechanism.

Belongs to the PanB family. As to quaternary structure, homodecamer; pentamer of dimers. Mg(2+) serves as cofactor.

It is found in the cytoplasm. The catalysed reaction is 3-methyl-2-oxobutanoate + (6R)-5,10-methylene-5,6,7,8-tetrahydrofolate + H2O = 2-dehydropantoate + (6S)-5,6,7,8-tetrahydrofolate. It functions in the pathway cofactor biosynthesis; (R)-pantothenate biosynthesis; (R)-pantoate from 3-methyl-2-oxobutanoate: step 1/2. Functionally, catalyzes the reversible reaction in which hydroxymethyl group from 5,10-methylenetetrahydrofolate is transferred onto alpha-ketoisovalerate to form ketopantoate. The sequence is that of 3-methyl-2-oxobutanoate hydroxymethyltransferase from Acetivibrio thermocellus (strain ATCC 27405 / DSM 1237 / JCM 9322 / NBRC 103400 / NCIMB 10682 / NRRL B-4536 / VPI 7372) (Clostridium thermocellum).